A 309-amino-acid chain; its full sequence is Porphobilinogen deaminase (309 aa).

Cys-244 is subject to S-(dipyrrolylmethanemethyl)cysteine.

This sequence belongs to the HMBS family. As to quaternary structure, monomer. Dipyrromethane serves as cofactor.

It catalyses the reaction 4 porphobilinogen + H2O = hydroxymethylbilane + 4 NH4(+). It functions in the pathway porphyrin-containing compound metabolism; protoporphyrin-IX biosynthesis; coproporphyrinogen-III from 5-aminolevulinate: step 2/4. In terms of biological role, tetrapolymerization of the monopyrrole PBG into the hydroxymethylbilane pre-uroporphyrinogen in several discrete steps. The polypeptide is Porphobilinogen deaminase (Listeria monocytogenes serovar 1/2a (strain ATCC BAA-679 / EGD-e)).